Consider the following 386-residue polypeptide: Protein MGF 360-4L (386 aa).

This sequence belongs to the asfivirus MGF 360 family.

In terms of biological role, plays a role in virus cell tropism, and may be required for efficient virus replication in macrophages. This is Protein MGF 360-4L from Ornithodoros (relapsing fever ticks).